A 300-amino-acid chain; its full sequence is GTPase Era (300 aa).

The region spanning 4–172 (KSGFVALIGR…LEKIKKLLPE (169 aa)) is the Era-type G domain. A G1 region spans residues 12–19 (GRPNVGKS). 12-19 (GRPNVGKS) contacts GTP. Residues 38 to 42 (QTTRN) form a G2 region. The tract at residues 59-62 (DTPG) is G3. Residues 59-63 (DTPGV) and 122-125 (NKAD) each bind GTP. Residues 122–125 (NKAD) form a G4 region. The tract at residues 151 to 153 (IAA) is G5. One can recognise a KH type-2 domain in the interval 195–281 (IREKILLNLS…NLQLWVKVKK (87 aa)).

It belongs to the TRAFAC class TrmE-Era-EngA-EngB-Septin-like GTPase superfamily. Era GTPase family. Monomer.

The protein localises to the cytoplasm. It is found in the cell membrane. An essential GTPase that binds both GDP and GTP, with rapid nucleotide exchange. Plays a role in 16S rRNA processing and 30S ribosomal subunit biogenesis and possibly also in cell cycle regulation and energy metabolism. The polypeptide is GTPase Era (Caldicellulosiruptor saccharolyticus (strain ATCC 43494 / DSM 8903 / Tp8T 6331)).